A 96-amino-acid polypeptide reads, in one-letter code: Uteroglobin (96 aa).

An N-terminal signal peptide occupies residues 1-21 (MKIAITITVVMLSICCSSASS).

It belongs to the secretoglobin family. In terms of assembly, antiparallel homodimer; disulfide-linked. Interaction with LMBR1L is controversial. Club cells (nonciliated cells of the surface epithelium of the pulmonary airways).

It localises to the secreted. Binds phosphatidylcholine, phosphatidylinositol, polychlorinated biphenyls (PCB) and weakly progesterone, potent inhibitor of phospholipase A2. This Mus musculus (Mouse) protein is Uteroglobin (Scgb1a1).